Here is a 545-residue protein sequence, read N- to C-terminus: Adenine deaminase (545 aa).

The protein belongs to the metallo-dependent hydrolases superfamily. Adenine deaminase family. The cofactor is Mn(2+).

It carries out the reaction adenine + H2O + H(+) = hypoxanthine + NH4(+). The sequence is that of Adenine deaminase from Parabacteroides distasonis (strain ATCC 8503 / DSM 20701 / CIP 104284 / JCM 5825 / NCTC 11152).